Here is a 635-residue protein sequence, read N- to C-terminus: 1-deoxy-D-xylulose-5-phosphate synthase (635 aa).

Thiamine diphosphate contacts are provided by residues His-77 and 118–120 (GHA). Residue Asp-150 coordinates Mg(2+). Thiamine diphosphate contacts are provided by residues 151–152 (AS), Asn-179, Tyr-290, and Glu-372. Position 179 (Asn-179) interacts with Mg(2+).

This sequence belongs to the transketolase family. DXPS subfamily. As to quaternary structure, homodimer. The cofactor is Mg(2+). Requires thiamine diphosphate as cofactor.

The enzyme catalyses D-glyceraldehyde 3-phosphate + pyruvate + H(+) = 1-deoxy-D-xylulose 5-phosphate + CO2. It functions in the pathway metabolic intermediate biosynthesis; 1-deoxy-D-xylulose 5-phosphate biosynthesis; 1-deoxy-D-xylulose 5-phosphate from D-glyceraldehyde 3-phosphate and pyruvate: step 1/1. Functionally, catalyzes the acyloin condensation reaction between C atoms 2 and 3 of pyruvate and glyceraldehyde 3-phosphate to yield 1-deoxy-D-xylulose-5-phosphate (DXP). The sequence is that of 1-deoxy-D-xylulose-5-phosphate synthase from Leptospira borgpetersenii serovar Hardjo-bovis (strain JB197).